Consider the following 410-residue polypeptide: Phthiocerol/phthiodiolone dimycocerosyl transferase (410 aa).

His118 acts as the Proton acceptor in catalysis.

This sequence belongs to the acyltransferase PapA5 family. Monomer. Interacts directly with the acyl carrier protein (ACP) domain of the mycocerosic acid synthase (mas) protein.

The enzyme catalyses 2 a mycocerosyl-[mycocerosic acid synthase] + a phthiocerol = a dimycocerosyl phthiocerol + 2 holo-[mycocerosic acid synthase].. It catalyses the reaction 2 a mycocerosyl-[mycocerosic acid synthase] + a phthiodiolone = a dimycocerosyl phthiodiolone + 2 holo-[mycocerosic acid synthase].. It carries out the reaction 2 a mycocerosyl-[mycocerosic acid synthase] + a phenolphthiocerol = a dimycocerosyl phenolphthiocerol + 2 holo-[mycocerosic acid synthase].. Catalyzes diesterification of phthiocerol, phthiodiolone, and phenolphthiocerol with mycocerosic acids, the final step in the phthiocerol, phthiodiolone and phenolphthiocerol dimycocerosate esters (PDIM) synthesis. Can directly transfer the mycocerosate bound to the mycocerosic acid synthase (mas) onto the substrate alcohols. This is Phthiocerol/phthiodiolone dimycocerosyl transferase (papA5) from Mycobacterium sp. (strain JLS).